The following is a 345-amino-acid chain: Phenylalanine--tRNA ligase alpha subunit (345 aa).

E262 is a binding site for Mg(2+).

It belongs to the class-II aminoacyl-tRNA synthetase family. Phe-tRNA synthetase alpha subunit type 1 subfamily. Tetramer of two alpha and two beta subunits. Requires Mg(2+) as cofactor.

It localises to the cytoplasm. The catalysed reaction is tRNA(Phe) + L-phenylalanine + ATP = L-phenylalanyl-tRNA(Phe) + AMP + diphosphate + H(+). In Ehrlichia canis (strain Jake), this protein is Phenylalanine--tRNA ligase alpha subunit.